The chain runs to 272 residues: Deaminated glutathione amidase (272 aa).

Positions 1–253 (MKPYLAAALQ…PGLAIAEINP (253 aa)) constitute a CN hydrolase domain. Catalysis depends on Glu-43, which acts as the Proton acceptor. The active-site Proton donor is the Lys-115. Cys-158 (nucleophile) is an active-site residue.

Belongs to the carbon-nitrogen hydrolase superfamily. NIT1/NIT2 family.

It carries out the reaction N-(4-oxoglutaryl)-L-cysteinylglycine + H2O = L-cysteinylglycine + 2-oxoglutarate. Hydrolyzes deaminated glutathione (dGSH, 2-oxoglutaramate) to alpha-ketoglutarate (alpha-KG) and cysteinylglycine (specific activity 7.77 umol/min/mg), hydrolyzes alpha-ketoglutaramate (a-KGM, specific activity 2.13 umol/min/mg), has no activity on glutathione or L-glutamine. May function as a metabolite repair enzyme. The protein is Deaminated glutathione amidase of Synechocystis sp. (strain PCC 6803 / GT-S).